A 453-amino-acid chain; its full sequence is MSDIEIIEEIQPVSLKRKQPSTSFNGKRKRTSSGLIEKSETMKGTETEFEKFVIDRTITPQRKLNAEDVEKSGEDIGSSEWRKRLECTLLGSVSTPVTVKKENNIRKKISCFNCDGEHNLRDCTQRKDFRRISRKKRESGDGRQRVFYNDVGISKQREKHFKPGVISDRLRAALGLRGNDIPEHIYRMRRLGLIDGYPPGWLRKSIKSTDQLKFFDSTSKEDDEMSVKPPELDTSKIVWYPGFNGEQSSLNDREDFKIPPRDVFCSVYQDELLKIFKKSEKAEKRRAKSTPKHKKFANEDDDDVIVITSDEIKIDKFNTPGEEDSIIILDGSASTEEKHLLTPIRKDVKLGESMFELIGTPVFGSSLLTPVAPLEAFAVGIQPFEAREELTGCKGNFRNLMDKLKEIRENNFVPEPEEEVILVSTNEISSSNNSGTAKNKNNQNRKRNRRHAK.

2 disordered regions span residues 15-42 and 425-453; these read LKRK…SETM and TNEI…RHAK. Positions 425 to 437 are enriched in polar residues; that stretch reads TNEISSSNNSGTA. A compositionally biased stretch (basic residues) spans 443-453; sequence QNRKRNRRHAK.

This is an uncharacterized protein from Caenorhabditis elegans.